The primary structure comprises 379 residues: Inositol 3-kinase (379 aa).

Residues Ser217, 267–270, and Asn294 contribute to the ATP site; that span reads GAGD. The active-site Proton acceptor is the Asp270.

This sequence belongs to the carbohydrate kinase pfkB family.

It carries out the reaction myo-inositol + ATP = 1D-myo-inositol 3-phosphate + ADP + H(+). In terms of biological role, kinase that phosphorylates myo-inositol to produce multiple myo-inositol monophosphates, Ins(1)P, Ins(3)P, Ins(4)P, Ins(5)P and Ins(6)P. Participates in phytic acid biosynthesis in developing seeds. Phytic acid is the primary storage form of phosphorus in cereal grains and other plant seeds. This chain is Inositol 3-kinase, found in Zea mays (Maize).